A 349-amino-acid polypeptide reads, in one-letter code: Anthranilate phosphoribosyltransferase (349 aa).

5-phospho-alpha-D-ribose 1-diphosphate-binding positions include Gly81, 84–85 (GD), Thr89, 91–94 (NVST), 109–117 (KHGNRAASS), and Ala121. Gly81 lines the anthranilate pocket. Position 93 (Ser93) interacts with Mg(2+). Position 112 (Asn112) interacts with anthranilate. Arg167 lines the anthranilate pocket. Mg(2+) contacts are provided by Asp226 and Glu227.

Belongs to the anthranilate phosphoribosyltransferase family. Homodimer. The cofactor is Mg(2+).

It catalyses the reaction N-(5-phospho-beta-D-ribosyl)anthranilate + diphosphate = 5-phospho-alpha-D-ribose 1-diphosphate + anthranilate. It participates in amino-acid biosynthesis; L-tryptophan biosynthesis; L-tryptophan from chorismate: step 2/5. Its function is as follows. Catalyzes the transfer of the phosphoribosyl group of 5-phosphorylribose-1-pyrophosphate (PRPP) to anthranilate to yield N-(5'-phosphoribosyl)-anthranilate (PRA). The sequence is that of Anthranilate phosphoribosyltransferase from Methylocella silvestris (strain DSM 15510 / CIP 108128 / LMG 27833 / NCIMB 13906 / BL2).